Consider the following 71-residue polypeptide: Large ribosomal subunit protein bL31 (71 aa).

Positions 16, 18, 38, and 41 each coordinate Zn(2+).

The protein belongs to the bacterial ribosomal protein bL31 family. Type A subfamily. In terms of assembly, part of the 50S ribosomal subunit. The cofactor is Zn(2+).

In terms of biological role, binds the 23S rRNA. This chain is Large ribosomal subunit protein bL31, found in Francisella tularensis subsp. mediasiatica (strain FSC147).